A 139-amino-acid chain; its full sequence is Ribulose bisphosphate carboxylase small subunit, chromosomal (139 aa).

This sequence belongs to the RuBisCO small chain family. Heterohexadecamer of 8 large and 8 small subunits.

RuBisCO catalyzes two reactions: the carboxylation of D-ribulose 1,5-bisphosphate, the primary event in carbon dioxide fixation, as well as the oxidative fragmentation of the pentose substrate. Both reactions occur simultaneously and in competition at the same active site. Although the small subunit is not catalytic it is essential for maximal activity. This is Ribulose bisphosphate carboxylase small subunit, chromosomal from Cupriavidus necator (Alcaligenes eutrophus).